Consider the following 186-residue polypeptide: ATP synthase subunit delta (186 aa).

This sequence belongs to the ATPase delta chain family. F-type ATPases have 2 components, F(1) - the catalytic core - and F(0) - the membrane proton channel. F(1) has five subunits: alpha(3), beta(3), gamma(1), delta(1), epsilon(1). CF(0) has four main subunits: a(1), b(1), b'(1) and c(10-14). The alpha and beta chains form an alternating ring which encloses part of the gamma chain. F(1) is attached to F(0) by a central stalk formed by the gamma and epsilon chains, while a peripheral stalk is formed by the delta, b and b' chains.

The protein localises to the cell inner membrane. Its function is as follows. F(1)F(0) ATP synthase produces ATP from ADP in the presence of a proton or sodium gradient. F-type ATPases consist of two structural domains, F(1) containing the extramembraneous catalytic core and F(0) containing the membrane proton channel, linked together by a central stalk and a peripheral stalk. During catalysis, ATP synthesis in the catalytic domain of F(1) is coupled via a rotary mechanism of the central stalk subunits to proton translocation. In terms of biological role, this protein is part of the stalk that links CF(0) to CF(1). It either transmits conformational changes from CF(0) to CF(1) or is implicated in proton conduction. The polypeptide is ATP synthase subunit delta (Cereibacter sphaeroides (strain ATCC 17029 / ATH 2.4.9) (Rhodobacter sphaeroides)).